Here is a 71-residue protein sequence, read N- to C-terminus: uncharacterized protein (71 aa).

The helical transmembrane segment at 2–24 (IIAIVAVVIFLLNFLTPYGYMPM) threads the bilayer. Positions 48-71 (PAESSSNGGSMITKPSTGACQGGR) are disordered. The segment covering 49 to 71 (AESSSNGGSMITKPSTGACQGGR) has biased composition (polar residues).

Its subcellular location is the membrane. This is an uncharacterized protein from Archaeoglobus fulgidus (strain ATCC 49558 / DSM 4304 / JCM 9628 / NBRC 100126 / VC-16).